Here is a 142-residue protein sequence, read N- to C-terminus: Large ribosomal subunit protein uL13 (142 aa).

This sequence belongs to the universal ribosomal protein uL13 family. As to quaternary structure, part of the 50S ribosomal subunit.

In terms of biological role, this protein is one of the early assembly proteins of the 50S ribosomal subunit, although it is not seen to bind rRNA by itself. It is important during the early stages of 50S assembly. This Coxiella burnetii (strain CbuK_Q154) (Coxiella burnetii (strain Q154)) protein is Large ribosomal subunit protein uL13.